We begin with the raw amino-acid sequence, 2615 residues long: Polycystin-1-like protein 1 (2615 aa).

Over 1-1524 (MDVDEDQHAV…VSSISEFQSH (1524 aa)) the chain is Extracellular. Positions 17 to 93 (IQANPELCVS…GTNSFSNPPP (77 aa)) are disordered. 7 N-linked (GlcNAc...) asparagine glycosylation sites follow: Asn-224, Asn-297, Asn-306, Asn-390, Asn-440, Asn-534, and Asn-619. PKD domains lie at 291–373 (SVSV…VQKR) and 375–456 (MANR…VREP). An REJ domain is found at 457-1349 (CQPPPVKNMG…GEEDYLHKRN (893 aa)). The segment at 749–815 (SSKSDLPSNL…GEPMEEYSSL (67 aa)) is disordered. Polar residues predominate over residues 778–789 (ALSNLGSISAES). In terms of domain architecture, GAIN-B spans 1364–1512 (RFTGLSENSQ…SVLRRKLNAT (149 aa)). N-linked (GlcNAc...) asparagine glycosylation occurs at Asn-1458. Residues Cys-1468 and Cys-1494 are joined by a disulfide bond. The tract at residues 1468–1512 (CVFWDKTEWRSEGPYPQPGSSPEKVNCSYHHLAPVSVLRRKLNAT) is GPS. A glycan (N-linked (GlcNAc...) asparagine) is linked at Asn-1510. Residues 1525–1545 (PHNLLPGIFSAFLLVLYGILV) form a helical membrane-spanning segment. Residues 1546–1732 (SKSRYVDCHE…PPSRSYLHTQ (187 aa)) lie on the Cytoplasmic side of the membrane. One can recognise a PLAT domain in the interval 1573-1690 (QLYAVVIDTG…LGGHVLREFF (118 aa)). A helical membrane pass occupies residues 1733–1753 (RLAVSFCLLCVYSCLTALVTV). Over 1754–1772 (RDHQQRPLDVGPTAITLEP) the chain is Extracellular. The chain crosses the membrane as a helical span at residues 1773-1793 (FCMALLCTLLACPVAQLLSLL). Residues 1794–1905 (FRCSKEARGD…ELGSQKSRVC (112 aa)) are Cytoplasmic-facing. The tract at residues 1807–1840 (STQWPLRGVKTETPQGHDSSGRPDSRQPSPHPTS) is disordered. The helical transmembrane segment at 1906–1926 (LLWSSSVAWAISGSASLACGL) threads the bilayer. At 1927–1950 (GTGFLGYWFVPAQCMWWLYLLLLS) the chain is on the extracellular side. The helical transmembrane segment at 1951-1971 (LVCCAFITQPLMICLAALVFA) threads the bilayer. The Cytoplasmic segment spans residues 1972-2057 (WKRKHDSKFF…ERLRRESIMQ (86 aa)). The helical transmembrane segment at 2058-2078 (AALRDMTTHSIMLLLLLFIAY) threads the bilayer. Topologically, residues 2079–2288 (GRFCPGEISL…IFYSDSALKY (210 aa)) are extracellular. A helical membrane pass occupies residues 2289–2309 (LLMLSELLFLVLNVIHLCFQL). The Cytoplasmic portion of the chain corresponds to 2310-2332 (WGMTTKGILSYWRKPRHWLELSM). A helical membrane pass occupies residues 2333-2353 (VGVAIAYYAASGHLTTLAVNI). The Extracellular segment spans residues 2354–2379 (TDQFHKGLYQRLVDIGLMVSWHQRAR). Residues 2380 to 2400 (CLQGILLFLWMLKYVHLLSSL) traverse the membrane as a helical segment. Residues 2401–2405 (STMTP) lie on the Cytoplasmic side of the membrane. A helical transmembrane segment spans residues 2406-2426 (FSAVTCFPLFRVLLVGALLLA). Over 2427 to 2483 (AHYHSRWFLLFTGTLSHGTSAEAFPGLLLQFPGRSKKDSWHNCLKSDHGVMRCYYGT) the chain is Extracellular. A helical transmembrane segment spans residues 2484–2504 (LFLLLATLGFRMLRATFLTVF). Over 2505–2615 (QNRKSSHRKP…VSGPLAAESE (111 aa)) the chain is Cytoplasmic. Positions 2589 to 2615 (RAGDSPPVGSSEYQATGVSGPLAAESE) are disordered.

It belongs to the polycystin family. In terms of assembly, heterodimer. Interacts with PKD2 to form a calcium channel. Interacts with PKD2L1; to form ciliary calcium channel. May interact with GNA12, GNAS, GNAI1 and GNAI2. In testis, strong expression in Leydig cells, low level in seminal ducts, myoid cells and tunica vaginalis. Other tissues, including adrenal gland and heart myocardium, also show low expression. In embryo, highly expressed in the node.

The protein localises to the cell projection. It localises to the cilium membrane. In terms of biological role, component of a calcium-permeant ion channel formed by PKD1L2 and PKD1L1 in primary cilia, where it controls cilium calcium concentration, without affecting cytoplasmic calcium concentration, and regulates sonic hedgehog/SHH signaling and GLI2 transcription. The PKD1L1:PKD2L1 channel complex is mechanosensitive only at high pressures and is highly temperature sensitive. Also involved in left/right axis specification downstream of nodal flow by forming a complex with PKD2 in cilia to facilitate flow detection in left/right patterning. May function as a G-protein-coupled receptor. This is Polycystin-1-like protein 1 from Mus musculus (Mouse).